Reading from the N-terminus, the 121-residue chain is MARIAGVDIPRDKRVVISLTYVFGIGRTTAEKILTEAGISSETRVRDLTEDELGRIRDVIDRIKVEGDLRREVSLNIKRLMEIGSYRGLRHRRGLPVRGQNSKNNARTRKGPRRTVANKKK.

Residues 91–121 (HRRGLPVRGQNSKNNARTRKGPRRTVANKKK) are disordered. Positions 106–121 (ARTRKGPRRTVANKKK) are enriched in basic residues.

This sequence belongs to the universal ribosomal protein uS13 family. As to quaternary structure, part of the 30S ribosomal subunit. Forms a loose heterodimer with protein S19. Forms two bridges to the 50S subunit in the 70S ribosome.

Functionally, located at the top of the head of the 30S subunit, it contacts several helices of the 16S rRNA. In the 70S ribosome it contacts the 23S rRNA (bridge B1a) and protein L5 of the 50S subunit (bridge B1b), connecting the 2 subunits; these bridges are implicated in subunit movement. Contacts the tRNAs in the A and P-sites. In Bacillus cereus (strain G9842), this protein is Small ribosomal subunit protein uS13.